Reading from the N-terminus, the 72-residue chain is Translation initiation factor IF-1 (72 aa).

One can recognise an S1-like domain in the interval 2–72 (AKEDCIEMQG…NKGRIIFRSR (71 aa)).

This sequence belongs to the IF-1 family. Component of the 30S ribosomal translation pre-initiation complex which assembles on the 30S ribosome in the order IF-2 and IF-3, IF-1 and N-formylmethionyl-tRNA(fMet); mRNA recruitment can occur at any time during PIC assembly.

The protein localises to the cytoplasm. One of the essential components for the initiation of protein synthesis. Stabilizes the binding of IF-2 and IF-3 on the 30S subunit to which N-formylmethionyl-tRNA(fMet) subsequently binds. Helps modulate mRNA selection, yielding the 30S pre-initiation complex (PIC). Upon addition of the 50S ribosomal subunit IF-1, IF-2 and IF-3 are released leaving the mature 70S translation initiation complex. The chain is Translation initiation factor IF-1 from Pasteurella multocida (strain Pm70).